Here is a 783-residue protein sequence, read N- to C-terminus: BMP/retinoic acid-inducible neural-specific protein 2 (783 aa).

The N-terminal stretch at 1–33 (MRWQCGTRFRGLRPVVAPWTALLALGLPGWVLA) is a signal peptide. The MACPF domain maps to 85 to 281 (RYRIYREFAR…FVAAALSYIT (197 aa)). Asparagine 185, asparagine 354, asparagine 473, asparagine 579, asparagine 626, and asparagine 658 each carry an N-linked (GlcNAc...) asparagine glycan.

Belongs to the BRINP family.

The protein localises to the secreted. Inhibits neuronal cell proliferation by negative regulation of the cell cycle transition. In Pongo abelii (Sumatran orangutan), this protein is BMP/retinoic acid-inducible neural-specific protein 2 (BRINP2).